Reading from the N-terminus, the 131-residue chain is Methylglyoxal synthase (131 aa).

In terms of domain architecture, MGS-like spans 1-131; it reads MKIALIAHDK…GDLDYRKLRK (131 aa). Substrate is bound by residues His8, Lys12, 34-37, and 54-55; these read TGTT and SG. Residue Asp60 is the Proton donor/acceptor of the active site. His87 is a binding site for substrate.

Belongs to the methylglyoxal synthase family.

It catalyses the reaction dihydroxyacetone phosphate = methylglyoxal + phosphate. In terms of biological role, catalyzes the formation of methylglyoxal from dihydroxyacetone phosphate. The chain is Methylglyoxal synthase from Bacillus cereus (strain ATCC 14579 / DSM 31 / CCUG 7414 / JCM 2152 / NBRC 15305 / NCIMB 9373 / NCTC 2599 / NRRL B-3711).